Consider the following 623-residue polypeptide: Chaperone protein dnaK (623 aa).

Positions 598–623 (TPDAGAEGGAAPSQDDAIETDFSTEK) are disordered.

It belongs to the heat shock protein 70 family.

The protein localises to the plastid. It is found in the chloroplast. Functionally, acts as a chaperone. This chain is Chaperone protein dnaK, found in Emiliania huxleyi (Coccolithophore).